The sequence spans 769 residues: Wall-associated receptor kinase-like 10 (769 aa).

The signal sequence occupies residues 1–24 (MSSNCSCSLLSLFSLLLIIDLTVA). Residues 25 to 358 (SSCPKTCGGI…YTCEYTNHRP (334 aa)) are Extracellular-facing. N-linked (GlcNAc...) asparagine glycosylation is found at asparagine 58, asparagine 114, asparagine 134, asparagine 182, asparagine 187, asparagine 237, asparagine 262, and asparagine 296. The interval 291–351 (CLCDYNSTTT…CVNLLGGYTC (61 aa)) is atypical EGF-like. 3 cysteine pairs are disulfide-bonded: cysteine 293–cysteine 305, cysteine 327–cysteine 342, and cysteine 337–cysteine 351. The chain crosses the membrane as a helical span at residues 359-379 (LVIGLSTSFSTLVFIGGIYWL). Over 380–769 (YKFIRRQRRL…RSDVEPLFPR (390 aa)) the chain is Cytoplasmic. The Protein kinase domain occupies 433–718 (FSLTRILGEG…SYSEDMQPYE (286 aa)). Residues 439-447 (LGEGGQGTV) and lysine 461 each bind ATP. The residue at position 506 (tyrosine 506) is a Phosphotyrosine. Catalysis depends on aspartate 559, which acts as the Proton acceptor. Phosphothreonine occurs at positions 593 and 598. Tyrosine 606 carries the post-translational modification Phosphotyrosine.

Belongs to the protein kinase superfamily. Ser/Thr protein kinase family.

The protein resides in the membrane. The enzyme catalyses L-seryl-[protein] + ATP = O-phospho-L-seryl-[protein] + ADP + H(+). It catalyses the reaction L-threonyl-[protein] + ATP = O-phospho-L-threonyl-[protein] + ADP + H(+). In terms of biological role, serine/threonine-protein kinase that may function as a signaling receptor of extracellular matrix component. This is Wall-associated receptor kinase-like 10 (WAKL10) from Arabidopsis thaliana (Mouse-ear cress).